A 212-amino-acid polypeptide reads, in one-letter code: Calaxin (212 aa).

3 consecutive EF-hand domains span residues 65–100 (TDDMIMDRVFRGFDKDNDGCISVTEWVYGLSVFLRG), 101–136 (TLEEKMKYCFEVFDLNGDSFISKEEMFHMLKNSLLK), and 146–181 (GIKDLVEITLKKMDHDHDGKLSFADYEQAVREETLL). D78, D80, D82, C84, E89, D114, N116, D118, E125, D159, D161, D163, K165, and D170 together coordinate Ca(2+).

Component of the outer dynein arm-docking complex along with ODAD1, ODAD2, ODAD3 and ODAD4. As to expression, expressed in trachea multiciliated cells.

It is found in the cytoplasm. Its subcellular location is the cytoskeleton. It localises to the cilium axoneme. The protein localises to the cell projection. The protein resides in the cilium. It is found in the flagellum. Functionally, component of the outer dynein arm-docking complex (ODA-DC) that mediates outer dynein arms (ODA) binding onto the doublet microtubule. Seems to regulate the assembly of both ODAs and their axonemal docking complex onto ciliary microtubules. Regulates ciliary and flagellar motility and is required for cilia-driven determination of body laterality. In Bos taurus (Bovine), this protein is Calaxin (CLXN).